The following is a 263-amino-acid chain: Oncostatin-M (263 aa).

The N-terminal stretch at methionine 1 to alanine 24 is a signal peptide. 2 cysteine pairs are disulfide-bonded: cysteine 28/cysteine 139 and cysteine 71/cysteine 177. N-linked (GlcNAc...) asparagine glycans are attached at residues asparagine 30, asparagine 44, and asparagine 145. A propeptide spanning residues glutamine 207–alanine 263 is cleaved from the precursor. The segment covering tryptophan 241–proline 252 has biased composition (basic residues). The segment at tryptophan 241–alanine 263 is disordered. Residues serine 253–alanine 263 are compositionally biased toward polar residues.

The protein belongs to the LIF/OSM family. In terms of processing, propeptide processing is not important for receptor binding activity but may be important growth-inhibitory activity.

It localises to the secreted. In terms of biological role, growth regulator. Inhibits the proliferation of a number of tumor cell lines. It regulates cytokine production, including IL-6, G-CSF and GM-CSF from endothelial cells. Uses only type II OSM receptor (heterodimers composed of OSMR and IL6ST). Involved in the maturation of fetal hepatocytes, thereby promoting liver development and regeneration. In Mus musculus (Mouse), this protein is Oncostatin-M (Osm).